A 211-amino-acid polypeptide reads, in one-letter code: Ribosomal RNA small subunit methyltransferase G (211 aa).

S-adenosyl-L-methionine is bound by residues G74, L79, 125–126 (AE), and R140.

This sequence belongs to the methyltransferase superfamily. RNA methyltransferase RsmG family.

The protein resides in the cytoplasm. Its function is as follows. Specifically methylates the N7 position of guanine in position 518 of 16S rRNA. The polypeptide is Ribosomal RNA small subunit methyltransferase G (Clavibacter michiganensis subsp. michiganensis (strain NCPPB 382)).